We begin with the raw amino-acid sequence, 248 residues long: Acetylglutamate kinase (248 aa).

Substrate is bound by residues 41-42 (GG), Arg-63, and Asn-155.

The protein belongs to the acetylglutamate kinase family. ArgB subfamily.

It is found in the cytoplasm. It catalyses the reaction N-acetyl-L-glutamate + ATP = N-acetyl-L-glutamyl 5-phosphate + ADP. The protein operates within amino-acid biosynthesis; L-arginine biosynthesis; N(2)-acetyl-L-ornithine from L-glutamate: step 2/4. Catalyzes the ATP-dependent phosphorylation of N-acetyl-L-glutamate. The protein is Acetylglutamate kinase of Lactiplantibacillus plantarum (strain ATCC BAA-793 / NCIMB 8826 / WCFS1) (Lactobacillus plantarum).